We begin with the raw amino-acid sequence, 1169 residues long: RecBCD enzyme subunit RecB (1169 aa).

One can recognise a UvrD-like helicase ATP-binding domain in the interval Met1–Ser436. The interval Met1 to Ile839 is DNA-binding and helicase activity, interacts with RecC. Ala18–Thr25 contributes to the ATP binding site. Residues Ile459 to Gly746 form the UvrD-like helicase C-terminal domain. Positions Lys883–Leu1169 are nuclease activity, interacts with RecD and RecA. 3 residues coordinate Mg(2+): His939, Asp1052, and Asp1065. Asp1065 serves as the catalytic For nuclease activity.

This sequence belongs to the helicase family. UvrD subfamily. Heterotrimer of RecB, RecC and RecD. All subunits contribute to DNA-binding. Interacts with RecA. Mg(2+) serves as cofactor.

It carries out the reaction Exonucleolytic cleavage (in the presence of ATP) in either 5'- to 3'- or 3'- to 5'-direction to yield 5'-phosphooligonucleotides.. It catalyses the reaction Couples ATP hydrolysis with the unwinding of duplex DNA by translocating in the 3'-5' direction.. The enzyme catalyses ATP + H2O = ADP + phosphate + H(+). Functionally, a helicase/nuclease that prepares dsDNA breaks (DSB) for recombinational DNA repair. Binds to DSBs and unwinds DNA via a highly rapid and processive ATP-dependent bidirectional helicase activity. Unwinds dsDNA until it encounters a Chi (crossover hotspot instigator) sequence from the 3' direction. Cuts ssDNA a few nucleotides 3' to the Chi site. The properties and activities of the enzyme are changed at Chi. The Chi-altered holoenzyme produces a long 3'-ssDNA overhang and facilitates RecA-binding to the ssDNA for homologous DNA recombination and repair. Holoenzyme degrades any linearized DNA that is unable to undergo homologous recombination. In the holoenzyme this subunit contributes ATPase, 3'-5' helicase, exonuclease activity and loads RecA onto ssDNA. The protein is RecBCD enzyme subunit RecB of Borreliella burgdorferi (strain ATCC 35210 / DSM 4680 / CIP 102532 / B31) (Borrelia burgdorferi).